The sequence spans 196 residues: Small ribosomal subunit protein uS4c (196 aa).

Residues 17 to 36 (ALPGLTRKTPKSGSNLKKKF) form a disordered region. In terms of domain architecture, S4 RNA-binding spans 89–157 (MRLDNILFRL…VQNYIASSDP (69 aa)).

It belongs to the universal ribosomal protein uS4 family. Part of the 30S ribosomal subunit. Contacts protein S5. The interaction surface between S4 and S5 is involved in control of translational fidelity.

Its subcellular location is the plastid. The protein resides in the chloroplast. In terms of biological role, one of the primary rRNA binding proteins, it binds directly to 16S rRNA where it nucleates assembly of the body of the 30S subunit. Functionally, with S5 and S12 plays an important role in translational accuracy. This chain is Small ribosomal subunit protein uS4c (rps4), found in Calamagrostis epigeios (Wood small-reed grass).